We begin with the raw amino-acid sequence, 245 residues long: Orotidine 5'-phosphate decarboxylase (245 aa).

Substrate contacts are provided by residues Asp22, Lys44, 71–80, Thr131, Arg192, Gln201, Gly221, and Arg222; that span reads DLKFHDIPNT. The Proton donor role is filled by Lys73.

Belongs to the OMP decarboxylase family. Type 1 subfamily. Homodimer.

The catalysed reaction is orotidine 5'-phosphate + H(+) = UMP + CO2. It participates in pyrimidine metabolism; UMP biosynthesis via de novo pathway; UMP from orotate: step 2/2. Functionally, catalyzes the decarboxylation of orotidine 5'-monophosphate (OMP) to uridine 5'-monophosphate (UMP). This is Orotidine 5'-phosphate decarboxylase from Escherichia coli (strain K12 / MC4100 / BW2952).